Here is a 334-residue protein sequence, read N- to C-terminus: Probable fructose-bisphosphate aldolase class 1 (334 aa).

Belongs to the class I fructose-bisphosphate aldolase family.

The enzyme catalyses beta-D-fructose 1,6-bisphosphate = D-glyceraldehyde 3-phosphate + dihydroxyacetone phosphate. It functions in the pathway carbohydrate degradation; glycolysis; D-glyceraldehyde 3-phosphate and glycerone phosphate from D-glucose: step 4/4. This Xanthomonas axonopodis pv. citri (strain 306) protein is Probable fructose-bisphosphate aldolase class 1.